A 546-amino-acid chain; its full sequence is Phosphoglucomutase (546 aa).

Ser135 (phosphoserine intermediate) is an active-site residue. Ser135, Asp288, Asp290, and Asp292 together coordinate Mg(2+).

This sequence belongs to the phosphohexose mutase family. It depends on Mg(2+) as a cofactor.

It catalyses the reaction alpha-D-glucose 1-phosphate = alpha-D-glucose 6-phosphate. Its pathway is glycolipid metabolism; diglucosyl-diacylglycerol biosynthesis. Its function is as follows. Catalyzes the interconversion between glucose-6-phosphate and alpha-glucose-1-phosphate. This is the first step in the biosynthesis of diglucosyl-diacylglycerol (Glc2-DAG), i.e. a glycolipid found in the membrane, which is also used as a membrane anchor for lipoteichoic acid (LTA). In Staphylococcus epidermidis (strain ATCC 12228 / FDA PCI 1200), this protein is Phosphoglucomutase (pgcA).